The primary structure comprises 359 residues: MRQILIAVAIALAVAILLTPVLIRLFTRQGFGHEIREDGPPSHHKKRGTPSMGGVAIIAGIWVSYFGTHLVGVLMDGKGPSASGLLVLGLATSLGVVGFLDDLIKLRRARNLGLNKTAKTVGILVAAVLFGVLALQFRNADGLTPGSAELSYVREIATVTLAPAVFVLFCVVVVSAWSNAVNFTDGLDGLAAGAMAMVCAAYVLITFWQFRNACATAPGVGCYNVRDPLDLAIIAAATAGACIGFLWWNAAPAKIFMGDTGSLALGGIIAGLSVTSRTEMLAVVLGALFVAEVTSVVVQILAFRTTGRRVFRMAPFHHHFELVGWAETTVIIRFWLLTAIACGLGVALFYSEWLTTVGA.

A run of 10 helical transmembrane segments spans residues Gln-3–Ile-23, Val-55–Met-75, Gly-84–Ile-104, Thr-117–Phe-137, Ile-156–Ala-176, Leu-190–Phe-210, Leu-231–Ala-251, Ile-255–Thr-275, Val-283–Phe-303, and Val-330–Tyr-350.

Belongs to the glycosyltransferase 4 family. MraY subfamily. It depends on Mg(2+) as a cofactor.

It is found in the cell membrane. It carries out the reaction UDP-N-acetyl-alpha-D-muramoyl-L-alanyl-gamma-D-glutamyl-meso-2,6-diaminopimeloyl-D-alanyl-D-alanine + di-trans,octa-cis-undecaprenyl phosphate = di-trans,octa-cis-undecaprenyl diphospho-N-acetyl-alpha-D-muramoyl-L-alanyl-D-glutamyl-meso-2,6-diaminopimeloyl-D-alanyl-D-alanine + UMP. It functions in the pathway cell wall biogenesis; peptidoglycan biosynthesis. Catalyzes the initial step of the lipid cycle reactions in the biosynthesis of the cell wall peptidoglycan: transfers peptidoglycan precursor phospho-MurNAc-pentapeptide from UDP-MurNAc-pentapeptide onto the lipid carrier undecaprenyl phosphate, yielding undecaprenyl-pyrophosphoryl-MurNAc-pentapeptide, known as lipid I. This chain is Phospho-N-acetylmuramoyl-pentapeptide-transferase, found in Mycolicibacterium gilvum (strain PYR-GCK) (Mycobacterium gilvum (strain PYR-GCK)).